The following is a 435-amino-acid chain: MSHEGQEELLDYSDSEEIAVPTTTAPSAAAGEGANDKEADKKGSYVGIHATGFRDFLLKPELLRAIGDCGFEHPSEVQQVCIPQSILGTDVLCQAKSGLGKTAVFVLSTLQQLDPVPGEISTLVICHTRELAYQIRNEYARFSKYMPDVKTEVFYGGTPITRDLEKLKNKDTCPHIVVATPGRLHALVTEKSIRLNNIKSFVIDECDKVLEAVDMRRDVQDIFRNTPHQKQVMMFSATLSQEIRPVCKKFMQNPLEIYVDDEAKLTLHGLQQYYIKLDEKEKNRKLSDLLDSLEFNQVIIFVRSTQRANELNKLLCSSNFPSIAVHSGLPQEERIERYKSFKEFNKRICVSTDVFGRGIDIERINLAINYDLPNEADQYLHRVGRAGRFGTKGLAVSLVSTKDDEEVLEKIQSRFDVKITEFPEEGVDPSTYMNT.

Residues 1–40 (MSHEGQEELLDYSDSEEIAVPTTTAPSAAAGEGANDKEAD) form a disordered region. A compositionally biased stretch (acidic residues) spans 7 to 17 (EELLDYSDSEE). A compositionally biased stretch (low complexity) spans 19-33 (AVPTTTAPSAAAGEG). Positions 51 to 79 (TGFRDFLLKPELLRAIGDCGFEHPSEVQQ) match the Q motif motif. The Helicase ATP-binding domain occupies 82-257 (IPQSILGTDV…KKFMQNPLEI (176 aa)). An ATP-binding site is contributed by 95–102 (AKSGLGKT). Residues 204–207 (DECD) carry the DECD box motif. A Helicase C-terminal domain is found at 269–430 (GLQQYYIKLD…EFPEEGVDPS (162 aa)).

This sequence belongs to the DEAD box helicase family. DECD subfamily.

It is found in the nucleus. The enzyme catalyses ATP + H2O = ADP + phosphate + H(+). In terms of biological role, ATP-binding RNA helicase involved in transcription elongation and required for the export of mRNA out of the nucleus. SUB2 also plays a role in pre-mRNA splicing and spliceosome assembly. May be involved in rDNA and telomeric silencing, and maintenance of genome integrity. The sequence is that of ATP-dependent RNA helicase SUB2 (SUB2) from Debaryomyces hansenii (strain ATCC 36239 / CBS 767 / BCRC 21394 / JCM 1990 / NBRC 0083 / IGC 2968) (Yeast).